Here is a 249-residue protein sequence, read N- to C-terminus: Tumor necrosis factor ligand superfamily member 12 (249 aa).

At 1–21 (MAARRSQRRRGRRGEPGTALL) the chain is on the cytoplasmic side. Residues 22-42 (VPLALGLGLALACLGLLLAVV) form a helical; Signal-anchor for type II membrane protein membrane-spanning segment. Over 43–249 (SLGSRASLSA…LTYFGLFQVH (207 aa)) the chain is Extracellular. Residues 55 to 85 (PAQEELVAEEDQDPSELNPQTEESQDPAPFL) form a disordered region. A compositionally biased stretch (acidic residues) spans 56 to 68 (AQEELVAEEDQDP). One can recognise a THD domain in the interval 107 to 248 (IAAHYEVHPR…FLTYFGLFQV (142 aa)). N-linked (GlcNAc...) asparagine glycosylation occurs at N139. A disulfide bridge links C191 with C210.

The protein belongs to the tumor necrosis factor family. In terms of assembly, homotrimer. Interacts with the angiogenic factor AGGF1/VG5Q. In terms of processing, the soluble form derives from the membrane form by proteolytic processing. In terms of tissue distribution, highly expressed in adult heart, pancreas, skeletal muscle, brain, colon, small intestine, lung, ovary, prostate, spleen, lymph node, appendix and peripheral blood lymphocytes. Low expression in kidney, testis, liver, placenta, thymus and bone marrow. Also detected in fetal kidney, liver, lung and brain.

Its subcellular location is the cell membrane. The protein resides in the secreted. Its function is as follows. Binds to FN14 and possibly also to TNRFSF12/APO3. Weak inducer of apoptosis in some cell types. Mediates NF-kappa-B activation. Promotes angiogenesis and the proliferation of endothelial cells. Also involved in induction of inflammatory cytokines. Promotes IL8 secretion. The chain is Tumor necrosis factor ligand superfamily member 12 (TNFSF12) from Homo sapiens (Human).